A 227-amino-acid polypeptide reads, in one-letter code: Large ribosomal subunit protein uL3 (227 aa).

Residues 146-167 (RGPMAHGSKFHRHQGSNGACSS) form a disordered region.

This sequence belongs to the universal ribosomal protein uL3 family. As to quaternary structure, part of the 50S ribosomal subunit. Forms a cluster with proteins L14 and L19.

Functionally, one of the primary rRNA binding proteins, it binds directly near the 3'-end of the 23S rRNA, where it nucleates assembly of the 50S subunit. In Agathobacter rectalis (strain ATCC 33656 / DSM 3377 / JCM 17463 / KCTC 5835 / VPI 0990) (Eubacterium rectale), this protein is Large ribosomal subunit protein uL3.